The chain runs to 1110 residues: Retinal guanylyl cyclase 1 (1110 aa).

The signal sequence occupies residues 1–56 (MTACTFLAGGLRDPGLCGPTRWAPSPPGLPPIPPRPRLRLRPPLLLLLLLPRSVLS). Residues 57-467 (AVFTVGVLGP…PDTICNGGVE (411 aa)) are Extracellular-facing. Asparagine 302 is a glycosylation site (N-linked (GlcNAc...) asparagine). A helical transmembrane segment spans residues 468–492 (PSVVFIGFLLVVGMGLAGAFLAHYC). In terms of domain architecture, Protein kinase spans 493–813 (RHRLLHIQMV…DRTFELFKSI (321 aa)). The Cytoplasmic portion of the chain corresponds to 493–1110 (RHRLLHIQMV…KARPGQFSGK (618 aa)). One can recognise a Guanylate cyclase domain in the interval 885–1015 (TLYFSDIVGF…DTVNTASAME (131 aa)). Residues 1070–1110 (PIPKPPDLQPGASNHGISLHEIPPDRRQKLEKARPGQFSGK) are disordered. Positions 1091-1103 (IPPDRRQKLEKAR) are enriched in basic and acidic residues.

The protein belongs to the adenylyl cyclase class-4/guanylyl cyclase family. In terms of assembly, homodimer; requires homodimerization for guanylyl cyclase activity. Interacts (via C-terminus) with RD3 (via C-terminus); promotes the exit of GUCY2D from the endoplasmic reticulum and its trafficking to the photoreceptor outer segments. Interaction with RD3 negatively regulates GUCY2D guanylate cyclase activity. Expressed in the retina in rod outer segment.

Its subcellular location is the photoreceptor outer segment membrane. It localises to the endoplasmic reticulum membrane. The enzyme catalyses GTP = 3',5'-cyclic GMP + diphosphate. Activated by GUCA1A when free calcium ions concentration is low, and inhibited by GUCA1A when free calcium ions concentration is high. Negatively regulated by RD3; inhibits the basal and GUCA1A-stimulated guanylate cyclase activity. In terms of biological role, catalyzes the synthesis of cyclic GMP (cGMP) in rods and cones of photoreceptors. Plays an essential role in phototransduction, by mediating cGMP replenishment. May also participate in the trafficking of membrane-asociated proteins to the photoreceptor outer segment membrane. This Bos taurus (Bovine) protein is Retinal guanylyl cyclase 1 (GUCY2D).